The primary structure comprises 461 residues: Alkaline phosphatase 4 (461 aa).

Positions M1–A41 are cleaved as a signal peptide. D58 lines the Mg(2+) pocket. D58 is a Zn(2+) binding site. The active-site Phosphoserine intermediate is the S108. Mg(2+)-binding residues include T161 and E282. Residues D287, H291, D329, H330, and H423 each contribute to the Zn(2+) site.

It belongs to the alkaline phosphatase family. As to quaternary structure, monomer. Mg(2+) is required as a cofactor. It depends on Zn(2+) as a cofactor.

It catalyses the reaction a phosphate monoester + H2O = an alcohol + phosphate. This is Alkaline phosphatase 4 (phoA) from Bacillus subtilis (strain 168).